The chain runs to 365 residues: UDP-N-acetylglucosamine--N-acetylmuramyl-(pentapeptide) pyrophosphoryl-undecaprenol N-acetylglucosamine transferase (365 aa).

UDP-N-acetyl-alpha-D-glucosamine is bound by residues 17–19 (TGG), asparagine 129, arginine 167, serine 194, isoleucine 250, 269–274 (ALTVSE), and glutamine 295.

It belongs to the glycosyltransferase 28 family. MurG subfamily.

The protein resides in the cell inner membrane. The enzyme catalyses di-trans,octa-cis-undecaprenyl diphospho-N-acetyl-alpha-D-muramoyl-L-alanyl-D-glutamyl-meso-2,6-diaminopimeloyl-D-alanyl-D-alanine + UDP-N-acetyl-alpha-D-glucosamine = di-trans,octa-cis-undecaprenyl diphospho-[N-acetyl-alpha-D-glucosaminyl-(1-&gt;4)]-N-acetyl-alpha-D-muramoyl-L-alanyl-D-glutamyl-meso-2,6-diaminopimeloyl-D-alanyl-D-alanine + UDP + H(+). The protein operates within cell wall biogenesis; peptidoglycan biosynthesis. In terms of biological role, cell wall formation. Catalyzes the transfer of a GlcNAc subunit on undecaprenyl-pyrophosphoryl-MurNAc-pentapeptide (lipid intermediate I) to form undecaprenyl-pyrophosphoryl-MurNAc-(pentapeptide)GlcNAc (lipid intermediate II). This is UDP-N-acetylglucosamine--N-acetylmuramyl-(pentapeptide) pyrophosphoryl-undecaprenol N-acetylglucosamine transferase from Shewanella halifaxensis (strain HAW-EB4).